We begin with the raw amino-acid sequence, 122 residues long: MIQVESKLDVADNSGAKKVSCIKVLGGSKRRYASVGDIIVVSVKEAMPHSKVKKGAVMKAVVVRTKKEIGRPDGSYIKFDNNSAVLLNNSMDPVGTRIFGPVARELRGAGFMKIVSLAPEVL.

Belongs to the universal ribosomal protein uL14 family. Part of the 50S ribosomal subunit. Forms a cluster with proteins L3 and L19. In the 70S ribosome, L14 and L19 interact and together make contacts with the 16S rRNA in bridges B5 and B8.

Binds to 23S rRNA. Forms part of two intersubunit bridges in the 70S ribosome. This chain is Large ribosomal subunit protein uL14, found in Maridesulfovibrio salexigens (strain ATCC 14822 / DSM 2638 / NCIMB 8403 / VKM B-1763) (Desulfovibrio salexigens).